Here is a 218-residue protein sequence, read N- to C-terminus: Adenylate kinase (218 aa).

10–15 (GAGKGT) is an ATP binding site. Residues 30-59 (STGDMLRAAVKEETPLGRKAKEVMDSGNLV) form an NMP region. AMP-binding positions include threonine 31, arginine 36, 57 to 59 (NLV), 85 to 88 (GFPR), and glutamine 92. An LID region spans residues 122–159 (GRRVHPASGRTYHLTFNPPQQQGVDDETGEPLIQRVDD). ATP is bound by residues arginine 123 and 132–133 (TY). AMP-binding residues include arginine 156 and arginine 167. An ATP-binding site is contributed by glycine 203.

The protein belongs to the adenylate kinase family. In terms of assembly, monomer.

The protein resides in the cytoplasm. The catalysed reaction is AMP + ATP = 2 ADP. Its pathway is purine metabolism; AMP biosynthesis via salvage pathway; AMP from ADP: step 1/1. Functionally, catalyzes the reversible transfer of the terminal phosphate group between ATP and AMP. Plays an important role in cellular energy homeostasis and in adenine nucleotide metabolism. The sequence is that of Adenylate kinase from Chlorobium phaeovibrioides (strain DSM 265 / 1930) (Prosthecochloris vibrioformis (strain DSM 265)).